Consider the following 287-residue polypeptide: UPF0354 protein SSP1020 (287 aa).

The protein belongs to the UPF0354 family.

The polypeptide is UPF0354 protein SSP1020 (Staphylococcus saprophyticus subsp. saprophyticus (strain ATCC 15305 / DSM 20229 / NCIMB 8711 / NCTC 7292 / S-41)).